The following is a 483-amino-acid chain: UDP-N-acetylmuramoyl-L-alanyl-D-glutamate--2,6-diaminopimelate ligase (483 aa).

Residue Ser-30 coordinates UDP-N-acetyl-alpha-D-muramoyl-L-alanyl-D-glutamate. An ATP-binding site is contributed by 109–115 (GTNGKTT). UDP-N-acetyl-alpha-D-muramoyl-L-alanyl-D-glutamate contacts are provided by residues 151–152 (TT), Ser-178, and Arg-186. N6-carboxylysine is present on Lys-218. Meso-2,6-diaminopimelate is bound by residues Arg-380, 403–406 (DNPR), Gly-453, and Glu-457. The short motif at 403–406 (DNPR) is the Meso-diaminopimelate recognition motif element.

This sequence belongs to the MurCDEF family. MurE subfamily. The cofactor is Mg(2+). Post-translationally, carboxylation is probably crucial for Mg(2+) binding and, consequently, for the gamma-phosphate positioning of ATP.

The protein resides in the cytoplasm. It catalyses the reaction UDP-N-acetyl-alpha-D-muramoyl-L-alanyl-D-glutamate + meso-2,6-diaminopimelate + ATP = UDP-N-acetyl-alpha-D-muramoyl-L-alanyl-gamma-D-glutamyl-meso-2,6-diaminopimelate + ADP + phosphate + H(+). It participates in cell wall biogenesis; peptidoglycan biosynthesis. Its function is as follows. Catalyzes the addition of meso-diaminopimelic acid to the nucleotide precursor UDP-N-acetylmuramoyl-L-alanyl-D-glutamate (UMAG) in the biosynthesis of bacterial cell-wall peptidoglycan. This chain is UDP-N-acetylmuramoyl-L-alanyl-D-glutamate--2,6-diaminopimelate ligase, found in Chlamydia trachomatis serovar A (strain ATCC VR-571B / DSM 19440 / HAR-13).